The primary structure comprises 380 residues: Aminomethyltransferase (380 aa).

The protein belongs to the GcvT family. As to quaternary structure, the glycine cleavage system is composed of four proteins: P, T, L and H.

The catalysed reaction is N(6)-[(R)-S(8)-aminomethyldihydrolipoyl]-L-lysyl-[protein] + (6S)-5,6,7,8-tetrahydrofolate = N(6)-[(R)-dihydrolipoyl]-L-lysyl-[protein] + (6R)-5,10-methylene-5,6,7,8-tetrahydrofolate + NH4(+). Functionally, the glycine cleavage system catalyzes the degradation of glycine. The sequence is that of Aminomethyltransferase from Koribacter versatilis (strain Ellin345).